The primary structure comprises 326 residues: GTP 3',8-cyclase (326 aa).

Positions G5–S227 constitute a Radical SAM core domain. Residue R14 participates in GTP binding. 2 residues coordinate [4Fe-4S] cluster: C21 and C25. Residue Y27 participates in S-adenosyl-L-methionine binding. C28 serves as a coordination point for [4Fe-4S] cluster. R64 is a binding site for GTP. G68 lines the S-adenosyl-L-methionine pocket. GTP is bound at residue T95. S119 lines the S-adenosyl-L-methionine pocket. K155 lines the GTP pocket. M189 provides a ligand contact to S-adenosyl-L-methionine. C250 and C253 together coordinate [4Fe-4S] cluster. R255–R257 lines the GTP pocket. Residue C267 participates in [4Fe-4S] cluster binding.

It belongs to the radical SAM superfamily. MoaA family. As to quaternary structure, monomer and homodimer. It depends on [4Fe-4S] cluster as a cofactor.

It catalyses the reaction GTP + AH2 + S-adenosyl-L-methionine = (8S)-3',8-cyclo-7,8-dihydroguanosine 5'-triphosphate + 5'-deoxyadenosine + L-methionine + A + H(+). It participates in cofactor biosynthesis; molybdopterin biosynthesis. Functionally, catalyzes the cyclization of GTP to (8S)-3',8-cyclo-7,8-dihydroguanosine 5'-triphosphate. This Sulfurovum sp. (strain NBC37-1) protein is GTP 3',8-cyclase.